A 262-amino-acid chain; its full sequence is Probable cutinase 1 (262 aa).

The first 19 residues, 1 to 19 (MAPLKSLLLGASLATLALS), serve as a signal peptide directing secretion. Intrachain disulfides connect Cys-48–Cys-127 and Cys-74–Cys-88. Residue Ser-138 is the Nucleophile of the active site. Cysteines 189 and 196 form a disulfide. The active site involves Asp-193. The active-site Proton donor/acceptor is the His-206. The interval 228–262 (SSSTTSSSSDAASSSSAAGTSSSGLSGLSSFFGGL) is disordered.

The protein belongs to the cutinase family.

The protein localises to the secreted. It carries out the reaction cutin + H2O = cutin monomers.. Functionally, catalyzes the hydrolysis of complex carboxylic polyesters found in the cell wall of plants. Degrades cutin, a macromolecule that forms the structure of the plant cuticle. In Aspergillus niger (strain ATCC MYA-4892 / CBS 513.88 / FGSC A1513), this protein is Probable cutinase 1.